Reading from the N-terminus, the 399-residue chain is Glutamyl-tRNA reductase (399 aa).

Residues Thr45–Arg48, Ser93, Glu98–Gln100, and Gln104 each bind substrate. Cys46 acts as the Nucleophile in catalysis. Position 173 to 178 (Gly173 to Gly178) interacts with NADP(+).

Belongs to the glutamyl-tRNA reductase family. Homodimer.

It carries out the reaction (S)-4-amino-5-oxopentanoate + tRNA(Glu) + NADP(+) = L-glutamyl-tRNA(Glu) + NADPH + H(+). Its pathway is porphyrin-containing compound metabolism; protoporphyrin-IX biosynthesis; 5-aminolevulinate from L-glutamyl-tRNA(Glu): step 1/2. Catalyzes the NADPH-dependent reduction of glutamyl-tRNA(Glu) to glutamate 1-semialdehyde (GSA). This chain is Glutamyl-tRNA reductase, found in Methanobrevibacter smithii (strain ATCC 35061 / DSM 861 / OCM 144 / PS).